The primary structure comprises 274 residues: Rhamnulose-1-phosphate aldolase (274 aa).

Glu117 is an active-site residue. 3 residues coordinate Zn(2+): His141, His143, and His212.

This sequence belongs to the aldolase class II family. RhaD subfamily. As to quaternary structure, homotetramer. The cofactor is Zn(2+).

The protein resides in the cytoplasm. It catalyses the reaction L-rhamnulose 1-phosphate = (S)-lactaldehyde + dihydroxyacetone phosphate. The protein operates within carbohydrate degradation; L-rhamnose degradation; glycerone phosphate from L-rhamnose: step 3/3. Its function is as follows. Catalyzes the reversible cleavage of L-rhamnulose-1-phosphate to dihydroxyacetone phosphate (DHAP) and L-lactaldehyde. The sequence is that of Rhamnulose-1-phosphate aldolase from Escherichia coli O127:H6 (strain E2348/69 / EPEC).